We begin with the raw amino-acid sequence, 300 residues long: Ribosomal protein L11 methyltransferase (300 aa).

4 residues coordinate S-adenosyl-L-methionine: T152, G173, D195, and N234.

The protein belongs to the methyltransferase superfamily. PrmA family.

It localises to the cytoplasm. It carries out the reaction L-lysyl-[protein] + 3 S-adenosyl-L-methionine = N(6),N(6),N(6)-trimethyl-L-lysyl-[protein] + 3 S-adenosyl-L-homocysteine + 3 H(+). Its function is as follows. Methylates ribosomal protein L11. The protein is Ribosomal protein L11 methyltransferase of Paraburkholderia xenovorans (strain LB400).